Reading from the N-terminus, the 888-residue chain is Valine--tRNA ligase (888 aa).

A 'HIGH' region motif is present at residues 43–53 (PNVTGTLHLGH). The 'KMSKS' region signature appears at 538–542 (KMSKS). An ATP-binding site is contributed by Lys-541. The stretch at 821-888 (LIDLDAERAR…RLKAALGRLA (68 aa)) forms a coiled coil.

The protein belongs to the class-I aminoacyl-tRNA synthetase family. ValS type 1 subfamily. In terms of assembly, monomer.

The protein resides in the cytoplasm. It catalyses the reaction tRNA(Val) + L-valine + ATP = L-valyl-tRNA(Val) + AMP + diphosphate. Functionally, catalyzes the attachment of valine to tRNA(Val). As ValRS can inadvertently accommodate and process structurally similar amino acids such as threonine, to avoid such errors, it has a 'posttransfer' editing activity that hydrolyzes mischarged Thr-tRNA(Val) in a tRNA-dependent manner. The chain is Valine--tRNA ligase from Gluconobacter oxydans (strain 621H) (Gluconobacter suboxydans).